The following is a 309-amino-acid chain: Homoserine kinase (309 aa).

91–101 (PIGSGLGSSAC) lines the ATP pocket.

The protein belongs to the GHMP kinase family. Homoserine kinase subfamily.

The protein resides in the cytoplasm. The catalysed reaction is L-homoserine + ATP = O-phospho-L-homoserine + ADP + H(+). The protein operates within amino-acid biosynthesis; L-threonine biosynthesis; L-threonine from L-aspartate: step 4/5. Catalyzes the ATP-dependent phosphorylation of L-homoserine to L-homoserine phosphate. In Salmonella paratyphi B (strain ATCC BAA-1250 / SPB7), this protein is Homoserine kinase.